A 235-amino-acid polypeptide reads, in one-letter code: tRNA (guanine-N(1)-)-methyltransferase (235 aa).

Residues G113 and 133-138 each bind S-adenosyl-L-methionine; that span reads IGDYIL.

Belongs to the RNA methyltransferase TrmD family. Homodimer.

The protein resides in the cytoplasm. It carries out the reaction guanosine(37) in tRNA + S-adenosyl-L-methionine = N(1)-methylguanosine(37) in tRNA + S-adenosyl-L-homocysteine + H(+). In terms of biological role, specifically methylates guanosine-37 in various tRNAs. The protein is tRNA (guanine-N(1)-)-methyltransferase of Wolbachia sp. subsp. Brugia malayi (strain TRS).